We begin with the raw amino-acid sequence, 482 residues long: Tektin (482 aa).

Coiled-coil stretches lie at residues 100-129 (CLAEVISEIAELLSTKKRLEERNGKVQAKI), 171-204 (ARAVAQVDREVAQLEAVRAKLEADLRDKTEALRV), 282-324 (RLNE…ALTS), 376-407 (VKVAAVDREIAALDATAAQLESNIADKDDALR), and 441-478 (RTQTLARIRELEASLTSARREREAMESSIRQLRDTMGG). The segment at 311-330 (EQARAKGQRSALTSALDDKR) is disordered. Residue arginine 462 is modified to Asymmetric dimethylarginine.

The protein belongs to the tektin family. Asymmetrically dimethylated at Arg-462 during flagellum resorption. Probably methylated by PRMT1.

The protein localises to the cytoplasm. The protein resides in the cytoskeleton. It is found in the flagellum axoneme. It localises to the flagellum basal body. Structural component of ciliary and flagellar microtubules. Plays a key role in the assembly or attachment of the inner dynein arm to microtubules in flagella and cilia. Forms filamentous polymers in the walls of ciliary and flagellar microtubules. The sequence is that of Tektin from Chlamydomonas reinhardtii (Chlamydomonas smithii).